A 295-amino-acid polypeptide reads, in one-letter code: tRNA-cytidine(32) 2-sulfurtransferase (295 aa).

Positions 63–68 match the PP-loop motif motif; that stretch reads SGGKDS. The [4Fe-4S] cluster site is built by C138, C141, and C229.

Belongs to the TtcA family. In terms of assembly, homodimer. Mg(2+) is required as a cofactor. Requires [4Fe-4S] cluster as cofactor.

It localises to the cytoplasm. It catalyses the reaction cytidine(32) in tRNA + S-sulfanyl-L-cysteinyl-[cysteine desulfurase] + AH2 + ATP = 2-thiocytidine(32) in tRNA + L-cysteinyl-[cysteine desulfurase] + A + AMP + diphosphate + H(+). It participates in tRNA modification. Functionally, catalyzes the ATP-dependent 2-thiolation of cytidine in position 32 of tRNA, to form 2-thiocytidine (s(2)C32). The sulfur atoms are provided by the cysteine/cysteine desulfurase (IscS) system. The protein is tRNA-cytidine(32) 2-sulfurtransferase of Hyphomonas neptunium (strain ATCC 15444).